A 639-amino-acid chain; its full sequence is MAQYEFQTEVSQLLTLIIHSLYSHKEIFLRELISNASDALDKLKYEALVDGTYKQLHCEARIDIAFEEDAQRLVVRDTGIGMNAEDLRANLGTIARSGTKAFLSTLTRDQKQDSNLIGQFGVGFYSAFMVASKVEVITKKAAENTVWKWTSEGQNAYTLDEVDAAAFPVLEGVAEGSAGTCVVLHLSQENSEFATRWRLEEVIKKYSDHIAFPIYLHYLQKEYDKDGAVTDTQKKVDQVNDAGALWKRPKSELKEEDYHRFYQTLTRDSTPPLLYVHTKAEGTQEYVTLFYVPAKAPFDLFHADYKPGVKLFVKRVFITDDEKELLPVYLRFVRGVIDSEDLPLNVSREILQQNRVLAAIKSASVKKLLGEFKRLAECDGKKYDEFITQYNRPLKEGLYSDYEHREQLLELVRFRTLSESVPEDGWTSFAEYVSRMKPDQKAIYYIAGNDDRVLRQSPHAESYRLQGFEVLVMSDDIDGIVMPSVSKYKEWELRAINRLGSEEELRPNEETDAAAQREQGFKPLLERLTHILSDSVKEVRLSKRLSDSVSCIVIDENDPTVQMERLMRATGQTHKSKIKPILEINASHTLVQKLKESTDEAFVEDLAFVLLDQALLIEGMDVGSSVDFVKRVNRLLARG.

The tract at residues 1-348 is a; substrate-binding; it reads MAQYEFQTEV…SEDLPLNVSR (348 aa). The segment at 349-565 is b; the sequence is EILQQNRVLA…ENDPTVQMER (217 aa). The c stretch occupies residues 566-639; that stretch reads LMRATGQTHK…KRVNRLLARG (74 aa).

This sequence belongs to the heat shock protein 90 family. In terms of assembly, homodimer.

It localises to the cytoplasm. Its function is as follows. Molecular chaperone. Has ATPase activity. The sequence is that of Chaperone protein HtpG from Treponema pallidum (strain Nichols).